The sequence spans 113 residues: Translation initiation factor IF-1, chloroplastic (113 aa).

The S1-like domain occupies 8 to 83 (REKKNPREAK…SKGRIIYRLP (76 aa)). Positions 86–113 (DSKRIEDSKDSEDLKDSEDLKDTKDSKD) are disordered.

The protein belongs to the IF-1 family. As to quaternary structure, component of the 30S ribosomal translation pre-initiation complex which assembles on the 30S ribosome in the order IF-2 and IF-3, IF-1 and N-formylmethionyl-tRNA(fMet); mRNA recruitment can occur at any time during PIC assembly.

The protein resides in the plastid. It is found in the chloroplast. One of the essential components for the initiation of protein synthesis. Stabilizes the binding of IF-2 and IF-3 on the 30S subunit to which N-formylmethionyl-tRNA(fMet) subsequently binds. Helps modulate mRNA selection, yielding the 30S pre-initiation complex (PIC). Upon addition of the 50S ribosomal subunit IF-1, IF-2 and IF-3 are released leaving the mature 70S translation initiation complex. This is Translation initiation factor IF-1, chloroplastic from Hordeum vulgare (Barley).